A 482-amino-acid polypeptide reads, in one-letter code: Glutamate--tRNA ligase (482 aa).

The 'HIGH' region motif lies at proline 9–glycine 19. The short motif at lysine 252 to arginine 256 is the 'KMSKS' region element. Lysine 255 contributes to the ATP binding site.

It belongs to the class-I aminoacyl-tRNA synthetase family. Glutamate--tRNA ligase type 1 subfamily. As to quaternary structure, monomer.

It is found in the cytoplasm. It carries out the reaction tRNA(Glu) + L-glutamate + ATP = L-glutamyl-tRNA(Glu) + AMP + diphosphate. Catalyzes the attachment of glutamate to tRNA(Glu) in a two-step reaction: glutamate is first activated by ATP to form Glu-AMP and then transferred to the acceptor end of tRNA(Glu). The polypeptide is Glutamate--tRNA ligase (Ureaplasma urealyticum serovar 10 (strain ATCC 33699 / Western)).